The sequence spans 294 residues: Light-independent protochlorophyllide reductase iron-sulfur ATP-binding protein (294 aa).

ATP-binding positions include 10–15 and Lys39; that span reads GIGKST. Ser14 is a binding site for Mg(2+). [4Fe-4S] cluster-binding residues include Cys95 and Cys129. Residue 180-181 coordinates ATP; the sequence is NR.

Belongs to the NifH/BchL/ChlL family. In terms of assembly, homodimer. Protochlorophyllide reductase is composed of three subunits; ChlL, ChlN and ChlB. [4Fe-4S] cluster is required as a cofactor.

The protein localises to the plastid. Its subcellular location is the chloroplast. The enzyme catalyses chlorophyllide a + oxidized 2[4Fe-4S]-[ferredoxin] + 2 ADP + 2 phosphate = protochlorophyllide a + reduced 2[4Fe-4S]-[ferredoxin] + 2 ATP + 2 H2O. It functions in the pathway porphyrin-containing compound metabolism; chlorophyll biosynthesis (light-independent). Functionally, component of the dark-operative protochlorophyllide reductase (DPOR) that uses Mg-ATP and reduced ferredoxin to reduce ring D of protochlorophyllide (Pchlide) to form chlorophyllide a (Chlide). This reaction is light-independent. The L component serves as a unique electron donor to the NB-component of the complex, and binds Mg-ATP. This is Light-independent protochlorophyllide reductase iron-sulfur ATP-binding protein from Pleurastrum terricola (Filamentous green alga).